A 342-amino-acid polypeptide reads, in one-letter code: Paired box protein Pax-9 (342 aa).

The paired DNA-binding region spans 4-130; it reads AFGEVNQLGG…SSISRILRNK (127 aa). Residues 7–63 are PAI subdomain; sequence EVNQLGGVFVNGRPLPNAIRLRIVELAQLGIRPCDISRQLRVSHGCVSKILARYNET. An RED subdomain region spans residues 82 to 130; it reads TVVKHIRTYKQRDPGIFAWEIRDRLLADGVCDKYNVPSVSSISRILRNK. An interaction with KDM5B region spans residues 168-189; the sequence is AAAAKVPTPPGVPAIPGSVALP.

In terms of assembly, interacts with KDM5B.

It localises to the nucleus. Transcription factor required for normal development of thymus, parathyroid glands, ultimobranchial bodies, teeth, skeletal elements of skull and larynx as well as distal limbs. This chain is Paired box protein Pax-9, found in Rattus norvegicus (Rat).